We begin with the raw amino-acid sequence, 470 residues long: Flotillin-like protein 1 (470 aa).

Cys-35 carries the S-palmitoyl cysteine lipid modification. Positions 305-354 form a coiled coil; that stretch reads EYETKVQEANWELYNKQKQAEAVLYEKQKQAEAQKAQADAAFYSKQKEAE.

Belongs to the band 7/mec-2 family. Flotillin subfamily. In terms of processing, may be palmitoylated.

Its subcellular location is the cell membrane. It is found in the membrane. The protein resides in the caveola. May act as a scaffolding protein within caveolar membranes, functionally participating in formation of caveolae or caveolae-like vesicles. The chain is Flotillin-like protein 1 (FLOT1) from Arabidopsis thaliana (Mouse-ear cress).